Reading from the N-terminus, the 184-residue chain is TATA-box-binding protein (184 aa).

Repeat copies occupy residues 9 to 85 (IENI…IDKL) and 100 to 178 (VQNI…KKDL).

This sequence belongs to the TBP family.

Functionally, general factor that plays a role in the activation of archaeal genes transcribed by RNA polymerase. Binds specifically to the TATA box promoter element which lies close to the position of transcription initiation. This Picrophilus torridus (strain ATCC 700027 / DSM 9790 / JCM 10055 / NBRC 100828 / KAW 2/3) protein is TATA-box-binding protein.